Consider the following 164-residue polypeptide: Neurotrophin-3 (164 aa).

The first 3 residues, 1-3 (IQS), serve as a signal peptide directing secretion. A propeptide spanning residues 4–118 (TSMDQGBLSE…GLNRTSRRKR (115 aa)) is cleaved from the precursor. Residues 89–126 (LLSENTPLEPPPLYLTEEPMGLNRTSRRKRFAEGKSHR) form a disordered region. An N-linked (GlcNAc...) asparagine glycan is attached at Asn111.

This sequence belongs to the NGF-beta family.

The protein localises to the secreted. Functionally, seems to promote the survival of visceral and proprioceptive sensory neurons. The sequence is that of Neurotrophin-3 (NTF3) from Cylindrophis ruffus (Red-tailed pipe snake).